The sequence spans 228 residues: Large ribosomal subunit protein uL1 (228 aa).

This sequence belongs to the universal ribosomal protein uL1 family. As to quaternary structure, part of the 50S ribosomal subunit.

Binds directly to 23S rRNA. The L1 stalk is quite mobile in the ribosome, and is involved in E site tRNA release. Its function is as follows. Protein L1 is also a translational repressor protein, it controls the translation of the L11 operon by binding to its mRNA. In Clavibacter michiganensis subsp. michiganensis (strain NCPPB 382), this protein is Large ribosomal subunit protein uL1.